The following is a 49-amino-acid chain: DNA-directed RNA polymerase subunit Rpo12 (49 aa).

Residues Cys-11, Cys-27, and Cys-30 each contribute to the Zn(2+) site.

Belongs to the archaeal Rpo12/eukaryotic RPC10 RNA polymerase subunit family. Part of the RNA polymerase complex. Zn(2+) is required as a cofactor.

The protein resides in the cytoplasm. The enzyme catalyses RNA(n) + a ribonucleoside 5'-triphosphate = RNA(n+1) + diphosphate. Its function is as follows. DNA-dependent RNA polymerase (RNAP) catalyzes the transcription of DNA into RNA using the four ribonucleoside triphosphates as substrates. In Pyrococcus abyssi (strain GE5 / Orsay), this protein is DNA-directed RNA polymerase subunit Rpo12.